A 167-amino-acid polypeptide reads, in one-letter code: CGG triplet repeat-binding protein 1 (167 aa).

At S56 the chain carries Phosphoserine. Positions 65–86 are disordered; the sequence is KTHTKRKAEFEEQNVRKKQRPL. The Nuclear localization signal signature appears at 80–84; that stretch reads RKKQR. A Phosphoserine modification is found at S164.

The protein localises to the nucleus. Its function is as follows. Binds to nonmethylated 5'-d(CGG)(n)-3' trinucleotide repeats in the FMR1 promoter. May play a role in regulating FMR1 promoter. This is CGG triplet repeat-binding protein 1 (Cggbp1) from Mus musculus (Mouse).